Consider the following 94-residue polypeptide: Sapecin (94 aa).

Positions Met1 to Ala23 are cleaved as a signal peptide. A propeptide spanning residues Ser24 to Arg54 is cleaved from the precursor. Intrachain disulfides connect Cys57/Cys84, Cys70/Cys90, and Cys74/Cys92.

The protein belongs to the invertebrate defensin family. Type 1 subfamily. As to expression, hemocytes and fat body.

The protein resides in the secreted. Its function is as follows. Sapecins, which are potent bactericidal proteins, are produced in response to injury. Sapecin is cytotoxic to Gram-positive bacteria, and to a lesser extent against Gram-negative bacteria. This chain is Sapecin, found in Sarcophaga peregrina (Flesh fly).